Consider the following 816-residue polypeptide: Subtilisin-like protease SBT2.6 (816 aa).

Residues 1–19 (MDIGCKVLVFFTCFLTVTA) form the signal peptide. The propeptide at 20-126 (EIYIVTMEGE…VDRDWKVRKL (107 aa)) is activation peptide. The Inhibitor I9 domain occupies 22–124 (YIVTMEGEPI…KSVDRDWKVR (103 aa)). One can recognise a Peptidase S8 domain in the interval 120-672 (DWKVRKLTTH…SGHVNPSAAL (553 aa)). Catalysis depends on charge relay system residues Asp-160 and His-235. Residues 418–492 (DCQKPEVLNK…SCIPGILITD (75 aa)) enclose the PA domain. N-linked (GlcNAc...) asparagine glycans are attached at residues Asn-504 and Asn-578. Ser-597 (charge relay system) is an active-site residue. Residue Asn-702 is glycosylated (N-linked (GlcNAc...) asparagine).

This sequence belongs to the peptidase S8 family.

It localises to the secreted. The sequence is that of Subtilisin-like protease SBT2.6 from Arabidopsis thaliana (Mouse-ear cress).